The primary structure comprises 270 residues: Nuclease P1 (270 aa).

Residues Trp1, His6, His15, Asp45, and His60 each coordinate a divalent metal cation. Position 1–6 (1–6 (WGALGH)) interacts with substrate. Residues 45 to 51 (DEYRLTS), 60 to 63 (HFID), and 73 to 78 (NVDYER) contribute to the substrate site. 2 disulfides stabilise this stretch: Cys72/Cys217 and Cys80/Cys85. Asn92 carries an N-linked (GlcNAc...) asparagine glycan. 3 residues coordinate a divalent metal cation: His116, Asp120, and His126. A substrate binding region spans residues 116–164 (HFIGDMTQPLHDEAYAVGGNKINVTFDGYHDNLHSDWDTYMPQKLIGGH). N-linked (GlcNAc...) asparagine glycosylation occurs at Asn138. A divalent metal cation is bound by residues His149 and Asp153. N-linked (GlcNAc...) asparagine glycosylation is found at Asn184 and Asn197.

Belongs to the nuclease type I family. Requires Zn(2+) as cofactor.

It localises to the secreted. The enzyme catalyses Endonucleolytic cleavage to 5'-phosphomononucleotide and 5'-phosphooligonucleotide end-products.. In terms of biological role, hydrolyzes only single-stranded DNA and RNA without apparent specificity for bases. This chain is Nuclease P1, found in Penicillium citrinum.